Consider the following 299-residue polypeptide: MLDKTRLRIAMQKSGRLSDESQELLSRCGIKINLQQQRLIAFAENMPIDILRVRDDDIPGLVMDGVVDLGIIGENVLEEELLNRRAQGDDPRYFTLRRLDFGGCRLSLAAPLDAEYTGPQCLQDTRIATSYPHILKQYLDKQGVRFKSCLLNGSVEVAPRAGLADAICDLVSTGATLEANGLREVEVIYRSKACLIQRDGEMSVDKQQLIDRLMTRIQGVIQARESKYIMMHAPSERLDEIITLLPGAERPTILPLAGDKSRVAMHMVSSETLFWETMEKLKALGASSILVLPIEKMME.

The protein belongs to the ATP phosphoribosyltransferase family. Long subfamily. As to quaternary structure, equilibrium between an active dimeric form, an inactive hexameric form and higher aggregates. Interconversion between the various forms is largely reversible and is influenced by the natural substrates and inhibitors of the enzyme. Requires Mg(2+) as cofactor.

Its subcellular location is the cytoplasm. It carries out the reaction 1-(5-phospho-beta-D-ribosyl)-ATP + diphosphate = 5-phospho-alpha-D-ribose 1-diphosphate + ATP. Its pathway is amino-acid biosynthesis; L-histidine biosynthesis; L-histidine from 5-phospho-alpha-D-ribose 1-diphosphate: step 1/9. Feedback inhibited by histidine. Functionally, catalyzes the condensation of ATP and 5-phosphoribose 1-diphosphate to form N'-(5'-phosphoribosyl)-ATP (PR-ATP). Has a crucial role in the pathway because the rate of histidine biosynthesis seems to be controlled primarily by regulation of HisG enzymatic activity. In Yersinia pseudotuberculosis serotype O:1b (strain IP 31758), this protein is ATP phosphoribosyltransferase.